The primary structure comprises 118 residues: 5-hydroxyisourate hydrolase (118 aa).

Positions 7, 46, and 115 each coordinate substrate.

Belongs to the transthyretin family. 5-hydroxyisourate hydrolase subfamily. In terms of assembly, homotetramer.

It catalyses the reaction 5-hydroxyisourate + H2O = 5-hydroxy-2-oxo-4-ureido-2,5-dihydro-1H-imidazole-5-carboxylate + H(+). Catalyzes the hydrolysis of 5-hydroxyisourate (HIU) to 2-oxo-4-hydroxy-4-carboxy-5-ureidoimidazoline (OHCU). This is 5-hydroxyisourate hydrolase from Brucella suis biovar 1 (strain 1330).